The sequence spans 74 residues: Acyl carrier protein (74 aa).

In terms of domain architecture, Carrier spans 1–73 (MAVFEKVQEI…DLVAYVEEQA (73 aa)). Serine 35 carries the O-(pantetheine 4'-phosphoryl)serine modification.

The protein belongs to the acyl carrier protein (ACP) family. In terms of processing, 4'-phosphopantetheine is transferred from CoA to a specific serine of apo-ACP by AcpS. This modification is essential for activity because fatty acids are bound in thioester linkage to the sulfhydryl of the prosthetic group.

Its subcellular location is the cytoplasm. It functions in the pathway lipid metabolism; fatty acid biosynthesis. Its function is as follows. Carrier of the growing fatty acid chain in fatty acid biosynthesis. In Streptococcus pneumoniae serotype 4 (strain ATCC BAA-334 / TIGR4), this protein is Acyl carrier protein.